The sequence spans 428 residues: L-gulono-1,4-lactone dehydrogenase (428 aa).

An FAD-binding PCMH-type domain is found at 12–179 (QVCAPSAIVR…SQVTLQTVPL (168 aa)).

This sequence belongs to the oxygen-dependent FAD-linked oxidoreductase family. A divalent metal cation is required as a cofactor.

It catalyses the reaction L-gulono-1,4-lactone + 2 Fe(III)-[cytochrome c] = L-ascorbate + 2 Fe(II)-[cytochrome c] + 3 H(+). It functions in the pathway cofactor biosynthesis; L-ascorbate biosynthesis. In terms of biological role, oxidizes L-gulono-1,4-lactone to L-xylo-hexulonolactone which spontaneously isomerizes to L-ascorbate. In Mycobacterium tuberculosis (strain CDC 1551 / Oshkosh), this protein is L-gulono-1,4-lactone dehydrogenase.